Here is a 215-residue protein sequence, read N- to C-terminus: Large ribosomal subunit protein uL4 (215 aa).

Residues 43–97 (RRQGTHSTKTRAEVSGGGKKPWRQKGTGRARAGSTRSPIWVGGGKTHTPKPRDYS) are disordered.

Belongs to the universal ribosomal protein uL4 family. As to quaternary structure, part of the 50S ribosomal subunit.

One of the primary rRNA binding proteins, this protein initially binds near the 5'-end of the 23S rRNA. It is important during the early stages of 50S assembly. It makes multiple contacts with different domains of the 23S rRNA in the assembled 50S subunit and ribosome. In terms of biological role, forms part of the polypeptide exit tunnel. This is Large ribosomal subunit protein uL4 from Brachyspira pilosicoli (Serpulina pilosicoli).